A 953-amino-acid chain; its full sequence is Nonsense-mediated mRNA decay factor SMG8 (953 aa).

2 disordered regions span residues 571–604 (AQDAELDPDEEDEELPTGEREEQHITQSNGCSQP) and 629–653 (PCFDQSSSSEAESTCSGTSSEESNN). Acidic residues predominate over residues 574–586 (AELDPDEEDEELP). Residues 595–604 (ITQSNGCSQP) show a composition bias toward polar residues. Residues 634–653 (SSSSEAESTCSGTSSEESNN) show a composition bias toward low complexity.

It belongs to the SMG8 family.

Involved in nonsense-mediated decay (NMD) of mRNAs containing premature stop codons. Probable component of kinase complex containing nonC and recruited to stalled ribosomes. This is Nonsense-mediated mRNA decay factor SMG8 from Drosophila persimilis (Fruit fly).